The sequence spans 156 residues: 6,7-dimethyl-8-ribityllumazine synthase (156 aa).

5-amino-6-(D-ribitylamino)uracil-binding positions include phenylalanine 28, 62-64 (ALE), and 86-88 (AVI). 91 to 92 (ET) contributes to the (2S)-2-hydroxy-3-oxobutyl phosphate binding site. Histidine 94 functions as the Proton donor in the catalytic mechanism. A 5-amino-6-(D-ribitylamino)uracil-binding site is contributed by asparagine 119. Arginine 133 contributes to the (2S)-2-hydroxy-3-oxobutyl phosphate binding site.

This sequence belongs to the DMRL synthase family.

It catalyses the reaction (2S)-2-hydroxy-3-oxobutyl phosphate + 5-amino-6-(D-ribitylamino)uracil = 6,7-dimethyl-8-(1-D-ribityl)lumazine + phosphate + 2 H2O + H(+). It participates in cofactor biosynthesis; riboflavin biosynthesis; riboflavin from 2-hydroxy-3-oxobutyl phosphate and 5-amino-6-(D-ribitylamino)uracil: step 1/2. In terms of biological role, catalyzes the formation of 6,7-dimethyl-8-ribityllumazine by condensation of 5-amino-6-(D-ribitylamino)uracil with 3,4-dihydroxy-2-butanone 4-phosphate. This is the penultimate step in the biosynthesis of riboflavin. This is 6,7-dimethyl-8-ribityllumazine synthase from Azoarcus sp. (strain BH72).